The chain runs to 273 residues: Ribosomal RNA small subunit methyltransferase A (273 aa).

S-adenosyl-L-methionine is bound by residues Asn-18, Leu-20, Gly-45, Glu-66, Asp-91, and Asn-113.

It belongs to the class I-like SAM-binding methyltransferase superfamily. rRNA adenine N(6)-methyltransferase family. RsmA subfamily.

The protein localises to the cytoplasm. The catalysed reaction is adenosine(1518)/adenosine(1519) in 16S rRNA + 4 S-adenosyl-L-methionine = N(6)-dimethyladenosine(1518)/N(6)-dimethyladenosine(1519) in 16S rRNA + 4 S-adenosyl-L-homocysteine + 4 H(+). Specifically dimethylates two adjacent adenosines (A1518 and A1519) in the loop of a conserved hairpin near the 3'-end of 16S rRNA in the 30S particle. May play a critical role in biogenesis of 30S subunits. The chain is Ribosomal RNA small subunit methyltransferase A from Cronobacter sakazakii (strain ATCC BAA-894) (Enterobacter sakazakii).